Consider the following 285-residue polypeptide: Bifunctional protein FolD (285 aa).

NADP(+) contacts are provided by residues 165 to 167 (GAS) and serine 190.

The protein belongs to the tetrahydrofolate dehydrogenase/cyclohydrolase family. As to quaternary structure, homodimer.

The enzyme catalyses (6R)-5,10-methylene-5,6,7,8-tetrahydrofolate + NADP(+) = (6R)-5,10-methenyltetrahydrofolate + NADPH. It carries out the reaction (6R)-5,10-methenyltetrahydrofolate + H2O = (6R)-10-formyltetrahydrofolate + H(+). The protein operates within one-carbon metabolism; tetrahydrofolate interconversion. Its function is as follows. Catalyzes the oxidation of 5,10-methylenetetrahydrofolate to 5,10-methenyltetrahydrofolate and then the hydrolysis of 5,10-methenyltetrahydrofolate to 10-formyltetrahydrofolate. This chain is Bifunctional protein FolD, found in Cupriavidus metallidurans (strain ATCC 43123 / DSM 2839 / NBRC 102507 / CH34) (Ralstonia metallidurans).